A 432-amino-acid chain; its full sequence is Lipoyl synthase, mitochondrial (432 aa).

Low complexity predominate over residues 32–68; that stretch reads TLGATPGSTSTSTSTSTATTTTLESTSTSTSGDATET. The tract at residues 32–71 is disordered; sequence TLGATPGSTSTSTSTSTATTTTLESTSTSTSGDATETTIK. The [4Fe-4S] cluster site is built by cysteine 150, cysteine 155, cysteine 161, cysteine 180, cysteine 184, cysteine 187, and serine 395. The Radical SAM core domain occupies 165-384; that stretch reads KKSEATATIM…RDVALEMGFL (220 aa).

The protein belongs to the radical SAM superfamily. Lipoyl synthase family. The cofactor is [4Fe-4S] cluster.

The protein localises to the mitochondrion. It carries out the reaction [[Fe-S] cluster scaffold protein carrying a second [4Fe-4S](2+) cluster] + N(6)-octanoyl-L-lysyl-[protein] + 2 oxidized [2Fe-2S]-[ferredoxin] + 2 S-adenosyl-L-methionine + 4 H(+) = [[Fe-S] cluster scaffold protein] + N(6)-[(R)-dihydrolipoyl]-L-lysyl-[protein] + 4 Fe(3+) + 2 hydrogen sulfide + 2 5'-deoxyadenosine + 2 L-methionine + 2 reduced [2Fe-2S]-[ferredoxin]. The protein operates within protein modification; protein lipoylation via endogenous pathway; protein N(6)-(lipoyl)lysine from octanoyl-[acyl-carrier-protein]: step 2/2. Functionally, catalyzes the radical-mediated insertion of two sulfur atoms into the C-6 and C-8 positions of the octanoyl moiety bound to the lipoyl domains of lipoate-dependent enzymes, thereby converting the octanoylated domains into lipoylated derivatives. The protein is Lipoyl synthase, mitochondrial of Lodderomyces elongisporus (strain ATCC 11503 / CBS 2605 / JCM 1781 / NBRC 1676 / NRRL YB-4239) (Yeast).